The sequence spans 252 residues: Flap endonuclease Xni (252 aa).

Position 105 (D105) interacts with Mg(2+). The 5'-3' exonuclease domain maps to 161-251; that stretch reads VESTQFIDYL…NVNLKQFRIE (91 aa). 5 residues coordinate K(+): L172, A173, P181, V183, and I186. The interval 185–190 is interaction with DNA; the sequence is GIGPKS.

It belongs to the Xni family. Mg(2+) is required as a cofactor. K(+) serves as cofactor.

Its function is as follows. Has flap endonuclease activity. During DNA replication, flap endonucleases cleave the 5'-overhanging flap structure that is generated by displacement synthesis when DNA polymerase encounters the 5'-end of a downstream Okazaki fragment. This is Flap endonuclease Xni from Shewanella halifaxensis (strain HAW-EB4).